We begin with the raw amino-acid sequence, 261 residues long: Oligodendrocyte transcription factor 1 (261 aa).

Residues 41-105 (PPISSSSSTS…LRRKINSRER (65 aa)) form a disordered region. Residues 44–56 (SSSSSTSSSSTAS) are compositionally biased toward low complexity. Residues 95–154 (QLRRKINSRERKRMQDLNLAMDALREVILPYSAAHCQGAPGRKLSKIATLLLARNYILLL) enclose the bHLH domain.

Expressed specifically in the brain, including the corpus callosum, hippocampal and cerebral white matter. Also detected in cells scattered in gray matter, most probably in oligodendrocytes.

Its subcellular location is the nucleus. In terms of biological role, promotes formation and maturation of oligodendrocytes, especially within the brain. Cooperates with OLIG2 to establish the pMN domain of the embryonic neural tube. The protein is Oligodendrocyte transcription factor 1 (Olig1) of Rattus norvegicus (Rat).